The following is a 378-amino-acid chain: Putative F-box protein At4g17565 (378 aa).

In terms of domain architecture, F-box spans 16 to 63 (PKWSELCPDLLRSIFEQLSFTNLNRAKLVCRSWNSASRGCVPKRNQIP).

In Arabidopsis thaliana (Mouse-ear cress), this protein is Putative F-box protein At4g17565.